A 487-amino-acid chain; its full sequence is Betaine aldehyde dehydrogenase (487 aa).

3 residues coordinate K(+): Ser26, Ile27, and Asp93. NAD(+) is bound at residue 150–152 (GAW). The active-site Charge relay system is Lys162. NAD(+)-binding positions include 176–179 (KPSE) and 229–232 (SVPT). Leu244 serves as a coordination point for K(+). Glu250 acts as the Proton acceptor in catalysis. The NAD(+) site is built by Gly252, Cys284, and Glu384. The Nucleophile role is filled by Cys284. Residue Cys284 is modified to Cysteine sulfenic acid (-SOH). K(+) contacts are provided by Lys454 and Gly457. Glu461 serves as the catalytic Charge relay system.

The protein belongs to the aldehyde dehydrogenase family. In terms of assembly, dimer of dimers. K(+) serves as cofactor.

The enzyme catalyses betaine aldehyde + NAD(+) + H2O = glycine betaine + NADH + 2 H(+). It functions in the pathway amine and polyamine biosynthesis; betaine biosynthesis via choline pathway; betaine from betaine aldehyde: step 1/1. In terms of biological role, involved in the biosynthesis of the osmoprotectant glycine betaine. Catalyzes the irreversible oxidation of betaine aldehyde to the corresponding acid. The chain is Betaine aldehyde dehydrogenase from Sinorhizobium fredii (strain NBRC 101917 / NGR234).